Here is a 259-residue protein sequence, read N- to C-terminus: Potassium/proton antiporter CemA (259 aa).

A run of 4 helical transmembrane segments spans residues 47-67, 136-156, 184-204, and 219-239; these read CLLV…EPWV, IITH…YLVM, ILLA…ELLI, and IISS…KYWI.

It belongs to the CemA family.

It is found in the plastid. The protein resides in the chloroplast inner membrane. The enzyme catalyses K(+)(in) + H(+)(out) = K(+)(out) + H(+)(in). Its function is as follows. Contributes to K(+)/H(+) antiport activity by supporting proton efflux to control proton extrusion and homeostasis in chloroplasts in a light-dependent manner to modulate photosynthesis. Prevents excessive induction of non-photochemical quenching (NPQ) under continuous-light conditions. Indirectly promotes efficient inorganic carbon uptake into chloroplasts. In Welwitschia mirabilis (Tree tumbo), this protein is Potassium/proton antiporter CemA.